Consider the following 78-residue polypeptide: Sec-independent protein translocase protein TatA (78 aa).

Residues 1–21 (MGMPSMPELLIILLIVVLLFG) traverse the membrane as a helical segment. The interval 46–78 (DEEEVATENKKEIEEKTTASTTKTTADQDTTKA) is disordered. Residues 52 to 62 (TENKKEIEEKT) are compositionally biased toward basic and acidic residues. Residues 63–78 (TASTTKTTADQDTTKA) show a composition bias toward low complexity.

Belongs to the TatA/E family. In terms of assembly, the Tat system comprises two distinct complexes: a TatABC complex, containing multiple copies of TatA, TatB and TatC subunits, and a separate TatA complex, containing only TatA subunits. Substrates initially bind to the TatABC complex, which probably triggers association of the separate TatA complex to form the active translocon.

The protein localises to the cell inner membrane. Functionally, part of the twin-arginine translocation (Tat) system that transports large folded proteins containing a characteristic twin-arginine motif in their signal peptide across membranes. TatA could form the protein-conducting channel of the Tat system. This Nitratiruptor sp. (strain SB155-2) protein is Sec-independent protein translocase protein TatA.